The primary structure comprises 416 residues: MTYHPKSDFLRVMQERGYLADCTDMQALDEALSNGVVPAYIGYDATAASLHVGHLLNIMMLRWLQKTGHKPITLMGGGTTKVGDPSFRSEERPLLTPDRIDENIEGMRKVFARYLSYGEGATDALMLNNAEWLDQLNYLDFLRDIGRHFSVNRMLSFESVKSRLDREQSLSFLEFNYMILQAYDFLELFRRTGCRLQMGGSDQWGNIVNGIDLTRRVLEGEIFGLTSPLLTTSDGRKMGKSAGGAVWLNGEMLAPYDFWQFWRNTTDADVGRFLKLYTELPVEECDRLGALQGSEINAAKILLANEVTTLLHGRDAAEAAEATARAVFEEGGVGGALEVVELPAATLGDGLSVAHFLVAAGLVASGKEAKRLVAENGLRFNNEPVGDANAPVTAATVGEELKVSIGRKKHKLVRLS.

Tyrosine 40 is an L-tyrosine binding site. Positions 45 to 54 (ATAASLHVGH) match the 'HIGH' region motif. Residues tyrosine 177 and glutamine 181 each contribute to the L-tyrosine site. A 'KMSKS' region motif is present at residues 237 to 241 (KMGKS). Lysine 240 lines the ATP pocket. The region spanning 351-416 (LSVAHFLVAA…RKKHKLVRLS (66 aa)) is the S4 RNA-binding domain.

This sequence belongs to the class-I aminoacyl-tRNA synthetase family. TyrS type 1 subfamily. As to quaternary structure, homodimer.

It localises to the cytoplasm. The enzyme catalyses tRNA(Tyr) + L-tyrosine + ATP = L-tyrosyl-tRNA(Tyr) + AMP + diphosphate + H(+). Functionally, catalyzes the attachment of tyrosine to tRNA(Tyr) in a two-step reaction: tyrosine is first activated by ATP to form Tyr-AMP and then transferred to the acceptor end of tRNA(Tyr). This chain is Tyrosine--tRNA ligase, found in Cereibacter sphaeroides (strain ATCC 17029 / ATH 2.4.9) (Rhodobacter sphaeroides).